A 567-amino-acid polypeptide reads, in one-letter code: Cytochrome P450 monooxygenase 79 (567 aa).

Residues 7 to 24 (ELAILAIVLLVTAVVFYT) traverse the membrane as a helical segment. N-linked (GlcNAc...) asparagine glycosylation is found at N223 and N279. Heme is bound at residue C475.

The protein belongs to the cytochrome P450 family. Heme is required as a cofactor.

It localises to the membrane. It functions in the pathway secondary metabolite biosynthesis. Its function is as follows. Cytochrome P450 monooxygenase that is able to use dehydroabietic acid as a substrate for oxidation. In Postia placenta (strain ATCC 44394 / Madison 698-R) (Brown rot fungus), this protein is Cytochrome P450 monooxygenase 79.